The sequence spans 239 residues: Phosphothreonine lyase OspF (239 aa).

H104 functions as the Proton donor in the catalytic mechanism. K134 functions as the Proton acceptor in the catalytic mechanism.

It belongs to the phosphothreonine lyase family.

Its subcellular location is the secreted. In terms of biological role, catalyzes the removal of the phosphate group from the phosphothreonine in the mitogen-activated protein kinases such as MAPK2/ERK2, MAPK3/ERK1, MAPK8 and MAPK14 in an irreversible reaction, thus preventing the downstream phosphorylation of histone H3. This epigenetic modification results in inhibition of the transcription of a specific subset of pro-inflammatory genes, and ultimately to a reduced immune response against the invading pathogen. The diminished immune response enhances the bacterium's ability to disseminate and multiply within the host. This is Phosphothreonine lyase OspF (ospF) from Shigella sonnei (strain Ss046).